The following is a 180-amino-acid chain: Hypoxanthine-guanine phosphoribosyltransferase (180 aa).

Residues Lys-40, 99-107 (EDIVDSGLT), Lys-131, and Asp-159 each bind GMP. The active-site Proton acceptor is the Asp-103. Asp-159 contacts Mg(2+).

This sequence belongs to the purine/pyrimidine phosphoribosyltransferase family. It depends on Mg(2+) as a cofactor.

The protein resides in the cytoplasm. It carries out the reaction IMP + diphosphate = hypoxanthine + 5-phospho-alpha-D-ribose 1-diphosphate. The catalysed reaction is GMP + diphosphate = guanine + 5-phospho-alpha-D-ribose 1-diphosphate. Its pathway is purine metabolism; IMP biosynthesis via salvage pathway; IMP from hypoxanthine: step 1/1. In terms of biological role, converts guanine to guanosine monophosphate, and hypoxanthine to inosine monophosphate. Transfers the 5-phosphoribosyl group from 5-phosphoribosylpyrophosphate onto the purine. Plays a central role in the generation of purine nucleotides through the purine salvage pathway. This is Hypoxanthine-guanine phosphoribosyltransferase (hprT) from Dictyostelium discoideum (Social amoeba).